We begin with the raw amino-acid sequence, 359 residues long: Small ribosomal subunit biogenesis GTPase RsgA (359 aa).

One can recognise a CP-type G domain in the interval 101–259 (KRKGSQAIAS…LMDNPGIREV (159 aa)). GTP contacts are provided by residues 149-152 (NKKD) and 201-209 (GSSGAGKST). Positions 284, 289, 291, and 297 each coordinate Zn(2+). The interval 331-359 (DPEEARKKKQKDKQMSKALQKRLKDKGRK) is disordered. Over residues 349–359 (LQKRLKDKGRK) the composition is skewed to basic residues.

Belongs to the TRAFAC class YlqF/YawG GTPase family. RsgA subfamily. In terms of assembly, monomer. Associates with 30S ribosomal subunit, binds 16S rRNA. Zn(2+) serves as cofactor.

It is found in the cytoplasm. Functionally, one of several proteins that assist in the late maturation steps of the functional core of the 30S ribosomal subunit. Helps release RbfA from mature subunits. May play a role in the assembly of ribosomal proteins into the subunit. Circularly permuted GTPase that catalyzes slow GTP hydrolysis, GTPase activity is stimulated by the 30S ribosomal subunit. In Leptospira interrogans serogroup Icterohaemorrhagiae serovar Lai (strain 56601), this protein is Small ribosomal subunit biogenesis GTPase RsgA.